The primary structure comprises 454 residues: Mediator of RNA polymerase II transcription subunit 1 (454 aa).

This sequence belongs to the Mediator complex subunit 1 family. As to quaternary structure, component of the Mediator complex.

It localises to the nucleus. In terms of biological role, component of the Mediator complex, a coactivator involved in the regulated transcription of nearly all RNA polymerase II-dependent genes. Mediator functions as a bridge to convey information from gene-specific regulatory proteins to the basal RNA polymerase II transcription machinery. Mediator is recruited to promoters by direct interactions with regulatory proteins and serves as a scaffold for the assembly of a functional preinitiation complex with RNA polymerase II and the general transcription factors. This chain is Mediator of RNA polymerase II transcription subunit 1 (med1), found in Schizosaccharomyces pombe (strain 972 / ATCC 24843) (Fission yeast).